The primary structure comprises 383 residues: Putative glutamate--cysteine ligase 2 (383 aa).

Belongs to the glutamate--cysteine ligase type 2 family. YbdK subfamily.

The catalysed reaction is L-cysteine + L-glutamate + ATP = gamma-L-glutamyl-L-cysteine + ADP + phosphate + H(+). In terms of biological role, ATP-dependent carboxylate-amine ligase which exhibits weak glutamate--cysteine ligase activity. This chain is Putative glutamate--cysteine ligase 2, found in Legionella pneumophila subsp. pneumophila (strain Philadelphia 1 / ATCC 33152 / DSM 7513).